The following is a 2135-amino-acid chain: Protein SUBSTANDARD STARCH GRAIN 4, chloroplastic (2135 aa).

2 stretches are compositionally biased toward low complexity: residues 1–10 (MSHCLRASPF) and 72–84 (QHQP…RQQQ). A chloroplast-targeting transit peptide spans 1–42 (MSHCLRASPFLSPPPPLLHPSRRRRHRQGGCIHTSPGTRPLV). 2 disordered regions span residues 1 to 44 (MSHC…LVAR) and 58 to 89 (SDSS…PPPP). Residues 43–104 (ARARFDPPPL…ASLAPLWREG (62 aa)) are Stromal-facing. Residues 105–125 (LFLVRCSVFAAALSVAAALSW) traverse the membrane as a helical segment. The Chloroplast intermembrane portion of the chain corresponds to 126-2135 (YAQLRARSFV…LFEYSATSQG (2010 aa)). Over residues 361–370 (RRRYRRKAHS) the composition is skewed to basic residues. 3 disordered regions span residues 361–382 (RRRY…SSQQ), 401–492 (SGNP…QVSE), and 1843–1869 (FLGS…SFKP). Polar residues-rich tracts occupy residues 373–382 (ISDTDNSSQQ), 454–490 (NFAS…NEQV), and 1846–1856 (SLSTSPDGQQS). Residues 1857–1866 (ETERTPEHGS) show a composition bias toward basic and acidic residues.

It belongs to the TamB family. As to quaternary structure, part of the TIC complex, which can interact with components of the TOC complex to form a larger import complex. In terms of tissue distribution, highly expressed in third leaf and developing seeds. Expressed in anthers, pistils, flag leaves and young panicles.

The protein localises to the plastid. Its subcellular location is the chloroplast inner membrane. The protein resides in the chloroplast intermembrane space. It localises to the chloroplast. It is found in the amyloplast. Its function is as follows. Part of the inner chloroplast membrane translocon complex (TIC) which associates with the outer chloroplast membrane translocon complex (TOC) and forms a supercomplex involved in protein precursor import into the chloroplast stroma. Required for the regulation of starch granule size in amyloplasts. This chain is Protein SUBSTANDARD STARCH GRAIN 4, chloroplastic, found in Oryza sativa subsp. japonica (Rice).